Consider the following 539-residue polypeptide: Netrin-G1 (539 aa).

Residues 1 to 18 (MYLSRFLSIHALWVTVSS) form the signal peptide. 3 cysteine pairs are disulfide-bonded: C33-C50, C72-C92, and C80-C88. Residues 46 to 296 (DYTACQPEST…AISDIKVRGR (251 aa)) form the Laminin N-terminal domain. The segment at 80 to 91 (CAMGNPYMCNNE) is NGL discriminant loop I. Residue N133 is glycosylated (N-linked (GlcNAc...) asparagine). C182 and C206 are oxidised to a cystine. Residues 208–214 (EEYSTGY) form an NGL discriminant loop II region. The NGL discriminant loop III stretch occupies residues 273–275 (EIF). 13 cysteine pairs are disulfide-bonded: C297/C306, C299/C315, C317/C326, C329/C354, C364/C373, C366/C384, C387/C396, C399/C417, C420/C432, C422/C438, C440/C449, C452/C462, and C488/C497. 3 Laminin EGF-like domains span residues 297 to 356 (CKCN…TCIP), 364 to 419 (CECF…VCIE), and 420 to 469 (CYCN…VCDN). N320 carries an N-linked (GlcNAc...) asparagine glycan. N406 carries N-linked (GlcNAc...) asparagine glycosylation. N-linked (GlcNAc...) asparagine glycosylation is present at N433. Residue S510 is the site of GPI-anchor amidated serine attachment. Residues 511–539 (ESGQGAPPRGSPALLLLTMLLGTAGPLVF) constitute a propeptide, removed in mature form.

In terms of processing, N-glycosylated. In terms of tissue distribution, expression is restricted primarily to neurons of the CNS, particularly in the dorsal thalamus, olfactory bulb and inferior colliculus. Isoform 1A and isoform 1D are the major products in adult brain.

Its subcellular location is the cell membrane. Functionally, involved in controlling patterning and neuronal circuit formation at the laminar, cellular, subcellular and synaptic levels. Promotes neurite outgrowth of both axons and dendrites. In Mus musculus (Mouse), this protein is Netrin-G1 (Ntng1).